Here is a 511-residue protein sequence, read N- to C-terminus: ADP,ATP carrier protein 4 (511 aa).

The next 12 membrane-spanning stretches (helical) occupy residues 34-54, 71-91, 102-122, 157-177, 192-212, 231-251, 296-316, 330-350, 361-381, 390-410, 453-473, and 476-496; these read VSKFLFITLLMFCILFIQNLI, ISFLKFWGVMPSAFLMTAIYV, IFYLIISIFLAFFALFAYVIF, FSLFYIIAELWPNVVFALLFW, FYPLFGLLSQTGIYLAGQFLE, FHTLSIQIILTIVLILGIIAI, LIATLLICYGIAINLVEGPWK, AAFIGSYLSYTGVFTILFVVL, FTAAVITPLIVFITGILFFAV, LIIANFILTDPALIAITIGAI, LGKSGSAFLQSLVFIILPSAS, and SISICLMIIFIITCLTWLWAT.

The protein belongs to the ADP/ATP translocase tlc family.

The protein localises to the cell membrane. Its function is as follows. Provides the rickettsial cell with host ATP in exchange for rickettsial ADP. This is an obligate exchange system. This energy acquiring activity is an important component of rickettsial parasitism. In Rickettsia felis (strain ATCC VR-1525 / URRWXCal2) (Rickettsia azadi), this protein is ADP,ATP carrier protein 4 (tlcD).